The primary structure comprises 1269 residues: Protein flightless-1 homolog (1269 aa).

Met1 is modified (N-acetylmethionine). The interval 1–427 is interaction with LRRFIP1 and LRRFIP2; the sequence is MEATGVLPFV…SGPKDPMARK (427 aa). LRR repeat units follow at residues 7–32, 33–55, 56–78, 80–103, 104–126, 127–149, 150–173, 175–196, 197–222, 223–245, 247–268, 269–291, 293–316, 318–339, 340–363, and 365–385; these read LPFV…VKAM, TSLR…LAAL, QKLE…LSSL, SLRA…IFKL, DDLS…LENA, KNML…LFIN, LTDL…MRRL, HLQT…QLPA, MTAL…LEGL, SNLA…LYTL, SLRR…IDQW, VHVE…ICKL, KLKK…IGKL, NLEE…LCRC, PKLR…HFLT, and IEVL…PADR. N6-acetyllysine is present on Lys21. Ser406 carries the phosphoserine modification. A Phosphoserine; by SGK3 modification is found at Ser436. Positions 452-473 are disordered; sequence VAQEKNKKQEESADARAPSGKV. Over residues 453 to 465 the composition is skewed to basic and acidic residues; the sequence is AQEKNKKQEESAD. The interaction with ACTL6A stretch occupies residues 495 to 827; the sequence is VGQLPGLTIW…TVSRSLEGTE (333 aa). Gelsolin-like repeat units lie at residues 509–591, 629–703, and 758–831; these read FVPV…EEFL, NIKL…PEFW, and ELMP…AQVF. The residue at position 818 (Thr818) is a Phosphothreonine; by SGK3. 2 positions are modified to phosphoserine: Ser856 and Ser860. The segment at 951–975 is disordered; the sequence is KKEDKEEKAEGKEGEEATAEAEEKQ. Residues 952 to 965 show a composition bias toward basic and acidic residues; the sequence is KEDKEEKAEGKEGE. The span at 966–975 shows a compositional bias: acidic residues; the sequence is EATAEAEEKQ. Gelsolin-like repeat units follow at residues 1075-1143 and 1181-1254; these read TDSS…PENF and KCSD…QHAF.

In terms of assembly, interacts with actin, ACTL6A, NCOA2 and CARM1. Interacts with LRRFIP1, LRRFIP2 and MYD88. Upon LPS stimulation, LRRFIP2 competes for MYD88-binding. LRRFIP1 constitutively blocks the interaction with MyD88, even in the absence of LPS. Interacts with the nuclear receptors ESR1 and THRB. Interacts with SGK3. Interacts (via the gelsolin-like region) with TMOD1. Interacts with (via the gelsolin-like region) TMOD3. Interacts with LMOD2, VCL, GSN and DES. In terms of tissue distribution, strongest expression in skeletal muscle with high expression also in the heart and lung.

It is found in the nucleus. It localises to the cytoplasm. The protein localises to the cytoskeleton. The protein resides in the microtubule organizing center. Its subcellular location is the centrosome. It is found in the cell projection. It localises to the podosome. The protein localises to the cell junction. The protein resides in the focal adhesion. Its function is as follows. Is a regulator of actin polymerization, required for proper myofibril organization and regulation of the length of sarcomeric thin filaments. It also plays a role in the assembly of cardiomyocyte cell adhesion complexes. Regulates cytoskeletal rearrangements involved in cytokinesis and cell migration, by inhibiting Rac1-dependent paxillin phosphorylation. May play a role as coactivator in transcriptional activation by hormone-activated nuclear receptors (NR) and acts in cooperation with NCOA2 and CARM1. Involved in estrogen hormone signaling. This is Protein flightless-1 homolog (FLII) from Homo sapiens (Human).